The primary structure comprises 204 residues: Somatotropin (204 aa).

A signal peptide spans Met1 to Ser17. Gln18 is modified (pyrrolidone carboxylic acid). His36 provides a ligand contact to Zn(2+). Cys69 and Cys177 form a disulfide bridge. Glu186 contributes to the Zn(2+) binding site. Residues Cys194 and Cys202 are joined by a disulfide bond.

The protein belongs to the somatotropin/prolactin family.

The protein resides in the secreted. Functionally, growth hormone plays an important role in growth control and is involved in the regulation of several anabolic processes. Implicated as an osmoregulatory substance important for seawater adaptation. The chain is Somatotropin (gh) from Acanthopagrus latus (Yellowfin seabream).